The following is a 132-amino-acid chain: Small ribosomal subunit protein eS12 (132 aa).

At alanine 2 the chain carries N-acetylalanine. N6-succinyllysine is present on lysine 129.

This sequence belongs to the eukaryotic ribosomal protein eS12 family. As to quaternary structure, part of the small subunit (SSU) processome, composed of more than 70 proteins and the RNA chaperone small nucleolar RNA (snoRNA) U3. Subunit of the 40S ribosomal complex.

The protein localises to the nucleus. The protein resides in the nucleolus. Its function is as follows. Part of the small subunit (SSU) processome, first precursor of the small eukaryotic ribosomal subunit. During the assembly of the SSU processome in the nucleolus, many ribosome biogenesis factors, an RNA chaperone and ribosomal proteins associate with the nascent pre-rRNA and work in concert to generate RNA folding, modifications, rearrangements and cleavage as well as targeted degradation of pre-ribosomal RNA by the RNA exosome. Subunit of the 40S ribosomal complex. In Rattus norvegicus (Rat), this protein is Small ribosomal subunit protein eS12 (Rps12).